We begin with the raw amino-acid sequence, 712 residues long: Polyribonucleotide nucleotidyltransferase (712 aa).

Asp484 and Asp490 together coordinate Mg(2+). A KH domain is found at 551-610; sequence PKVFTIQIHPDKIRDIIGPGGKVIRAIQAETGTRVDVDDSGLVKVSAVNLEEGEAALQMI. Residues 620 to 688 enclose the S1 motif domain; sequence GAVYEGTVVK…KDGKIRLSRK (69 aa). Residues 689 to 712 form a disordered region; sequence ALLEEENGKSGPENGAPQRDKNRH.

This sequence belongs to the polyribonucleotide nucleotidyltransferase family. Requires Mg(2+) as cofactor.

It localises to the cytoplasm. It catalyses the reaction RNA(n+1) + phosphate = RNA(n) + a ribonucleoside 5'-diphosphate. Involved in mRNA degradation. Catalyzes the phosphorolysis of single-stranded polyribonucleotides processively in the 3'- to 5'-direction. The polypeptide is Polyribonucleotide nucleotidyltransferase (Desulfatibacillum aliphaticivorans).